The following is a 715-amino-acid chain: Protein naked cuticle homolog (715 aa).

In terms of domain architecture, EF-hand spans 18-53 (KKPQPLQFSFTLYDLDGHGKITKDDIAGIVSTIYES). The disordered stretch occupies residues 256-282 (SRAKRKVVRKSRSSRKASKLTDDFSRP). Residues 257 to 273 (RAKRKVVRKSRSSRKAS) show a composition bias toward basic residues. A required for nuclear localization and inhibition of Wnt signaling region spans residues 305 to 334 (ECWKSSLCRRELIEIIRDSMVKNSLCFQPN). The disordered stretch occupies residues 639-690 (ELHQSVQQQQGTHQQQQQPQSSVSSPTHHHHHHAGASLLGENSGSSASAAST). Composition is skewed to low complexity over residues 642–664 (QSVQ…VSSP) and 673–690 (GASL…AAST).

It belongs to the NKD family.

The protein localises to the cell membrane. The protein resides in the cytoplasm. Its subcellular location is the nucleus. Its function is as follows. Cell autonomous antagonist of the canonical Wnt signaling pathway. May activate a second Wnt signaling pathway that controls planar cell polarity. Required for neuroblast specification. The sequence is that of Protein naked cuticle homolog from Aedes aegypti (Yellowfever mosquito).